Here is a 411-residue protein sequence, read N- to C-terminus: Arginine biosynthesis bifunctional protein ArgJ (411 aa).

Substrate contacts are provided by Thr-160, Lys-186, Thr-197, Glu-283, Asn-406, and Thr-411. Residue Thr-197 is the Nucleophile of the active site.

This sequence belongs to the ArgJ family. As to quaternary structure, heterotetramer of two alpha and two beta chains.

Its subcellular location is the cytoplasm. The catalysed reaction is N(2)-acetyl-L-ornithine + L-glutamate = N-acetyl-L-glutamate + L-ornithine. The enzyme catalyses L-glutamate + acetyl-CoA = N-acetyl-L-glutamate + CoA + H(+). Its pathway is amino-acid biosynthesis; L-arginine biosynthesis; L-ornithine and N-acetyl-L-glutamate from L-glutamate and N(2)-acetyl-L-ornithine (cyclic): step 1/1. The protein operates within amino-acid biosynthesis; L-arginine biosynthesis; N(2)-acetyl-L-ornithine from L-glutamate: step 1/4. With respect to regulation, feedback inhibition by L-ornithine. Catalyzes two activities which are involved in the cyclic version of arginine biosynthesis: the synthesis of N-acetylglutamate from glutamate and acetyl-CoA as the acetyl donor, and of ornithine by transacetylation between N(2)-acetylornithine and glutamate. This is Arginine biosynthesis bifunctional protein ArgJ from Halalkalibacterium halodurans (strain ATCC BAA-125 / DSM 18197 / FERM 7344 / JCM 9153 / C-125) (Bacillus halodurans).